Reading from the N-terminus, the 546-residue chain is MSAKDVKFGVEARDRMLRGVDILANAVKVTLGPKGRNVVLDKSFGAPRITKDGVTVAKEIELDDKFENMGAQMVREVASKSADAAGDGTTTATVLAQAIVREGAKAVAAGMNPMDLKRGIDLAVEAVVADLVKNSKKVTSNDEIAQVGTISANGDSEIGKFLADAMKKVGNEGVITVEEAKSLETELDVVEGMQFDRGYISPYFVTNADKMRVEMDDAYILINEKKLSSLNELLPLLEAVVQTGKPLVIVAEDVEGEALATLVVNRLRGGLKVAAVKAPGFGDRRKAMLQDIAILTGGQAISEDLGIKLENVNLSMLGRAKKVMIDKENTTIVNGAGKKADIEARVAQIKAQIEETTSDYDREKLQERLAKLAGGVAVIRVGGATEVEVKERKDRVDDAMHATRAAVEEGILPGGGVALLRASEQLKGVRTKNEDQKTGVEIVRKALSAPARQIAINAGEDGSVIVGKILEKEQYAYGFDSQSGDYVNMVSKGIIDPTKVVRTAIQNAASVASLLITTEAMVAELPKKAAAGPAMPPGGGMGGMDF.

Residues 30-33 (TLGP), Lys-51, 87-91 (DGTTT), Gly-415, and Asp-496 contribute to the ATP site.

It belongs to the chaperonin (HSP60) family. Forms a cylinder of 14 subunits composed of two heptameric rings stacked back-to-back. Interacts with the co-chaperonin GroES.

Its subcellular location is the cytoplasm. It catalyses the reaction ATP + H2O + a folded polypeptide = ADP + phosphate + an unfolded polypeptide.. In terms of biological role, together with its co-chaperonin GroES, plays an essential role in assisting protein folding. The GroEL-GroES system forms a nano-cage that allows encapsulation of the non-native substrate proteins and provides a physical environment optimized to promote and accelerate protein folding. This is Chaperonin GroEL 2 from Bradyrhizobium sp. (strain ORS 278).